The sequence spans 363 residues: Biotin synthase (363 aa).

One can recognise a Radical SAM core domain in the interval 40-268 (NVVQVSTLLS…ETQVRLSAGR (229 aa)). 3 residues coordinate [4Fe-4S] cluster: C55, C59, and C62. The [2Fe-2S] cluster site is built by C99, C131, C191, and R263.

Belongs to the radical SAM superfamily. Biotin synthase family. In terms of assembly, homodimer. [4Fe-4S] cluster is required as a cofactor. Requires [2Fe-2S] cluster as cofactor.

It carries out the reaction (4R,5S)-dethiobiotin + (sulfur carrier)-SH + 2 reduced [2Fe-2S]-[ferredoxin] + 2 S-adenosyl-L-methionine = (sulfur carrier)-H + biotin + 2 5'-deoxyadenosine + 2 L-methionine + 2 oxidized [2Fe-2S]-[ferredoxin]. It participates in cofactor biosynthesis; biotin biosynthesis; biotin from 7,8-diaminononanoate: step 2/2. Functionally, catalyzes the conversion of dethiobiotin (DTB) to biotin by the insertion of a sulfur atom into dethiobiotin via a radical-based mechanism. This chain is Biotin synthase, found in Flavobacterium johnsoniae (strain ATCC 17061 / DSM 2064 / JCM 8514 / BCRC 14874 / CCUG 350202 / NBRC 14942 / NCIMB 11054 / UW101) (Cytophaga johnsonae).